Reading from the N-terminus, the 124-residue chain is Ribonuclease pancreatic (124 aa).

Positions 1–13 (SETAAEKFERQHM) are enriched in basic and acidic residues. The disordered stretch occupies residues 1-23 (SETAAEKFERQHMDSYSSSSSNS). Residues K7 and R10 each coordinate substrate. Catalysis depends on H12, which acts as the Proton acceptor. Intrachain disulfides connect C26/C84, C40/C95, C58/C110, and C65/C72. Residues 41 to 45 (KPVNT), K66, and R85 contribute to the substrate site. The active-site Proton donor is the H119.

The protein belongs to the pancreatic ribonuclease family. Monomer. Interacts with and forms tight 1:1 complexes with RNH1. Dimerization of two such complexes may occur. Interaction with RNH1 inhibits this protein. In terms of tissue distribution, pancreas.

Its subcellular location is the secreted. The catalysed reaction is an [RNA] containing cytidine + H2O = an [RNA]-3'-cytidine-3'-phosphate + a 5'-hydroxy-ribonucleotide-3'-[RNA].. The enzyme catalyses an [RNA] containing uridine + H2O = an [RNA]-3'-uridine-3'-phosphate + a 5'-hydroxy-ribonucleotide-3'-[RNA].. In terms of biological role, endonuclease that catalyzes the cleavage of RNA on the 3' side of pyrimidine nucleotides. Acts on single-stranded and double-stranded RNA. The chain is Ribonuclease pancreatic (RNASE1) from Camelus bactrianus (Bactrian camel).